We begin with the raw amino-acid sequence, 264 residues long: Phosphate import ATP-binding protein PstB (264 aa).

Positions 11–250 (LKAEALSVYY…DTTEKIFDSP (240 aa)) constitute an ABC transporter domain. 43-50 (GPSGCGKS) serves as a coordination point for ATP.

This sequence belongs to the ABC transporter superfamily. Phosphate importer (TC 3.A.1.7) family. The complex is composed of two ATP-binding proteins (PstB), two transmembrane proteins (PstC and PstA) and a solute-binding protein (PstS).

The protein localises to the cell inner membrane. The enzyme catalyses phosphate(out) + ATP + H2O = ADP + 2 phosphate(in) + H(+). Its function is as follows. Part of the ABC transporter complex PstSACB involved in phosphate import. Responsible for energy coupling to the transport system. The protein is Phosphate import ATP-binding protein PstB of Synechococcus elongatus (strain ATCC 33912 / PCC 7942 / FACHB-805) (Anacystis nidulans R2).